Reading from the N-terminus, the 248-residue chain is Probable 2-oxo-3-(5-oxofuran-2-ylidene)propanoate lactonase (248 aa).

Residues C123, D180, and H212 contribute to the active site.

The protein belongs to the dienelactone hydrolase family.

It carries out the reaction 2-oxo-3-(5-oxofuran-2-ylidene)propanoate + H2O = 3-maleylpyruvate + H(+). In terms of biological role, involved in the 5-nitroanthranilic acid (5NAA) degradation. Catalyzes the hydrolysis of the lactone to produce maleylpyruvate biodegradation of 5-nitroanthranilate. The chain is Probable 2-oxo-3-(5-oxofuran-2-ylidene)propanoate lactonase (naaC) from Bradyrhizobium sp.